The sequence spans 281 residues: ATP phosphoribosyltransferase (281 aa).

This sequence belongs to the ATP phosphoribosyltransferase family. Long subfamily. Mg(2+) serves as cofactor.

Its subcellular location is the cytoplasm. It catalyses the reaction 1-(5-phospho-beta-D-ribosyl)-ATP + diphosphate = 5-phospho-alpha-D-ribose 1-diphosphate + ATP. The protein operates within amino-acid biosynthesis; L-histidine biosynthesis; L-histidine from 5-phospho-alpha-D-ribose 1-diphosphate: step 1/9. Feedback inhibited by histidine. Functionally, catalyzes the condensation of ATP and 5-phosphoribose 1-diphosphate to form N'-(5'-phosphoribosyl)-ATP (PR-ATP). Has a crucial role in the pathway because the rate of histidine biosynthesis seems to be controlled primarily by regulation of HisG enzymatic activity. This Corynebacterium diphtheriae (strain ATCC 700971 / NCTC 13129 / Biotype gravis) protein is ATP phosphoribosyltransferase.